The following is a 184-amino-acid chain: ATP synthase subunit b, chloroplastic (184 aa).

A helical membrane pass occupies residues 27–49; the sequence is LATNLINLSVVLGVLVFFGKGVL.

It belongs to the ATPase B chain family. In terms of assembly, F-type ATPases have 2 components, F(1) - the catalytic core - and F(0) - the membrane proton channel. F(1) has five subunits: alpha(3), beta(3), gamma(1), delta(1), epsilon(1). F(0) has four main subunits: a(1), b(1), b'(1) and c(10-14). The alpha and beta chains form an alternating ring which encloses part of the gamma chain. F(1) is attached to F(0) by a central stalk formed by the gamma and epsilon chains, while a peripheral stalk is formed by the delta, b and b' chains.

It localises to the plastid. The protein resides in the chloroplast thylakoid membrane. Functionally, f(1)F(0) ATP synthase produces ATP from ADP in the presence of a proton or sodium gradient. F-type ATPases consist of two structural domains, F(1) containing the extramembraneous catalytic core and F(0) containing the membrane proton channel, linked together by a central stalk and a peripheral stalk. During catalysis, ATP synthesis in the catalytic domain of F(1) is coupled via a rotary mechanism of the central stalk subunits to proton translocation. Its function is as follows. Component of the F(0) channel, it forms part of the peripheral stalk, linking F(1) to F(0). This chain is ATP synthase subunit b, chloroplastic, found in Cicer arietinum (Chickpea).